Consider the following 149-residue polypeptide: Large ribosomal subunit protein bL9 (149 aa).

The protein belongs to the bacterial ribosomal protein bL9 family.

Binds to the 23S rRNA. The polypeptide is Large ribosomal subunit protein bL9 (Bacillus licheniformis (strain ATCC 14580 / DSM 13 / JCM 2505 / CCUG 7422 / NBRC 12200 / NCIMB 9375 / NCTC 10341 / NRRL NRS-1264 / Gibson 46)).